The primary structure comprises 318 residues: Transaldolase (318 aa).

The Schiff-base intermediate with substrate role is filled by Lys132.

The protein belongs to the transaldolase family. Type 1 subfamily. Homodimer.

It localises to the cytoplasm. It catalyses the reaction D-sedoheptulose 7-phosphate + D-glyceraldehyde 3-phosphate = D-erythrose 4-phosphate + beta-D-fructose 6-phosphate. The protein operates within carbohydrate degradation; pentose phosphate pathway; D-glyceraldehyde 3-phosphate and beta-D-fructose 6-phosphate from D-ribose 5-phosphate and D-xylulose 5-phosphate (non-oxidative stage): step 2/3. In terms of biological role, transaldolase is important for the balance of metabolites in the pentose-phosphate pathway. The sequence is that of Transaldolase from Shewanella baltica (strain OS195).